Here is a 245-residue protein sequence, read N- to C-terminus: Rhamnogalacturonan acetylesterase (245 aa).

The N-terminal stretch at 1–17 (MKSIALTSLSLLPSALA) is a signal peptide. The Nucleophile role is filled by Ser-26. Cys-100 and Cys-108 are joined by a disulfide. Residues Asp-204 and His-207 contribute to the active site. Cys-226 and Cys-244 are disulfide-bonded.

The protein belongs to the 'GDSL' lipolytic enzyme family.

It is found in the secreted. It catalyses the reaction Hydrolytic cleavage of 2-O-acetyl- or 3-O-acetyl groups of alpha-D-galacturonic acid in rhamnogalacturonan I.. Plays a key role in the degradation of rhamnogalacturonan in the cell wall. Involved in degradation of pectin. The polypeptide is Rhamnogalacturonan acetylesterase (Emericella nidulans (strain FGSC A4 / ATCC 38163 / CBS 112.46 / NRRL 194 / M139) (Aspergillus nidulans)).